We begin with the raw amino-acid sequence, 266 residues long: Luciferase (266 aa).

A helical membrane pass occupies residues 22–41 (GLAAACCALAVASTIAFPYI).

The protein belongs to the fungal luciferase family.

Its subcellular location is the membrane. It catalyses the reaction 3-hydroxyhispidin + O2 = (E)-caffeoylpyruvate + hnu + CO2. The catalysed reaction is 3-hydroxyhispidin + O2 = 4-[(E)-2-(3,4-dihydroxyphenyl)ethenyl]-1,7-dihydroxy-2,3,5-trioxabicyclo[2.2.2]oct-7-en-6-one. Functionally, luciferase; part of the gene cluster that mediates the fungal bioluminescence cycle. Uses the fungal luciferin 3-hydroxyhispidin as a substrate to produce an endoperoxide as a high-energy intermediate with decomposition that yields oxyluciferin (also known as caffeoylpyruvate) and light emission. The fungal bioluminescence cycle begins with the hispidin synthetase that catalyzes the formation of hispidin which is further hydroxylated by the hispidin-3-hydroxylase, yielding the fungal luciferin 3-hydroxyhispidin. The luciferase then produces an endoperoxide as a high-energy intermediate with decomposition that yields oxyluciferin and light emission. Oxyluciferin can be recycled to caffeic acid by caffeoylpyruvate hydrolase. This chain is Luciferase, found in Armillaria gallica (Bulbous honey fungus).